The following is a 163-amino-acid chain: MMSVRLMLVVAVWLCLRVDASQDVMKNLSMNFAKPLEDCKKEMDLPDSVTTDFYNFWKEGYEFTNRHTGCAILCLSSKLELLDQEMKLHHGKAQEFAKKHGADDAMAKQLVDMIHGCSQSTPDATDDPCMKALNVAKCFKAKIHELNWAPSMELVVGEVLAEV.

Residues M1–Q22 form the signal peptide. 3 disulfides stabilise this stretch: C39–C74, C70–C129, and C117–C138.

It belongs to the PBP/GOBP family. As to expression, antenna.

In terms of biological role, this major soluble protein in olfactory sensilla of male moths might serve to solubilize the extremely hydrophobic pheromone molecules and to transport pheromone through the aqueous lymph to receptors located on olfactory cilia. The polypeptide is Pheromone-binding protein (Heliothis virescens (Tobacco budworm moth)).